An 806-amino-acid chain; its full sequence is Disintegrin and metalloproteinase domain-containing protein 1b (806 aa).

The first 33 residues, 1–33, serve as a signal peptide directing secretion; sequence MERLKLGKIPEHWCIRLVAMLLLAIIFLPSTFC. The segment at 169 to 188 is disordered; the sequence is CSVTPKDSPGDTSHPPRSRK. A Peptidase M12B domain is found at 203 to 397; the sequence is KYVEMFVVVN…HRGVCLLDEP (195 aa). An N-linked (GlcNAc...) asparagine glycan is attached at N224. Intrachain disulfides connect C313–C392, C353–C376, C355–C361, C462–C482, C635–C647, C641–C653, and C655–C664. Zn(2+) is bound at residue H338. E339 is an active-site residue. Residues H342 and H348 each coordinate Zn(2+). Residues N375 and N476 are each glycosylated (N-linked (GlcNAc...) asparagine). The region spanning 406–490 is the Disintegrin domain; the sequence is AANCGNGVVE…ACPSDRKAQD (85 aa). One can recognise an EGF-like domain in the interval 631–665; it reads FSFPCSPSKQCNKHGVCNDLGNCHCSFGFAPPDCK. The segment at 668-694 is disordered; the sequence is GTGGSVDSGPAVNLSNDSSPGPNSTQS. Residues N680, N683, and N690 are each glycosylated (N-linked (GlcNAc...) asparagine). The span at 680–694 shows a compositional bias: polar residues; it reads NLSNDSSPGPNSTQS. A helical transmembrane segment spans residues 705–725; it reads LIVLAVILVLMILLIIICIIS. Residues 726–806 lie on the Cytoplasmic side of the membrane; the sequence is AYTKSETASE…KDEDEEEGEE (81 aa). Residues 735-806 are disordered; the sequence is EAGPSELEEL…KDEDEEEGEE (72 aa). A compositionally biased stretch (acidic residues) spans 740–806; it reads ELEELPEGEK…KDEDEEEGEE (67 aa).

As to quaternary structure, heterodimer with ADAM2/fertilin subunit beta. As to expression, testis.

It is found in the membrane. Its function is as follows. May play a role in spermatogenesis and sperm maturation. In Mus musculus (Mouse), this protein is Disintegrin and metalloproteinase domain-containing protein 1b (Adam1b).